We begin with the raw amino-acid sequence, 238 residues long: Large ribosomal subunit protein uL2 (238 aa).

Residues 199-238 (PHGGGLHQSVSRSSTVARNTPPGRKVGHIAARRTGRRDRK) form a disordered region. Polar residues predominate over residues 206 to 216 (QSVSRSSTVAR). Positions 223–238 (KVGHIAARRTGRRDRK) are enriched in basic residues.

The protein belongs to the universal ribosomal protein uL2 family. As to quaternary structure, part of the 50S ribosomal subunit. Forms a bridge to the 30S subunit in the 70S ribosome.

Functionally, one of the primary rRNA binding proteins. Required for association of the 30S and 50S subunits to form the 70S ribosome, for tRNA binding and peptide bond formation. It has been suggested to have peptidyltransferase activity; this is somewhat controversial. Makes several contacts with the 16S rRNA in the 70S ribosome. In Metallosphaera sedula (strain ATCC 51363 / DSM 5348 / JCM 9185 / NBRC 15509 / TH2), this protein is Large ribosomal subunit protein uL2.